The primary structure comprises 495 residues: MLEHFCECYFNLSGLILCPVLGSIILLFIPNSRIRLIRLIGLCASLITFLYSLVLWIQFDSSTAKFQFVESLRWLPYENINFYLGIDGISLFFVILTTFLIPICILVGWSGMRSYGKEYIIAFLICEFLMIAVFCMLDLLLFYVFFESVLIPMFIIIGVWGSRQRKIKAAYQFFLYTLLGSLFMLLAILLILFQTGTTDLQILLTTEFSERRQIFLWIAFFASFAVKVPMVPVHIWLPEAHVEAPTAGSVILAGILLKFGTYGFLRFSIPMFPEATLCFTPFIYTLSAIAIIYTSLTTLRQIDLKKIIAYSSVAHMNLVTIGMFSLNIQGIGGSILLMLSHGLVSSALFLCVGVLYDRHKTRLVRYYGGLVSTMPNFSTIFFFFTLANMSLPGTSSFIGEFLILVGAFQRNSLVATLAALGMILGAAYSLWLYNRVVSGNLKPDFLHKFSDLNGREVFIFIPFLVGVVWMGVYPKVFLDCMHTSVSNLVQHGKFH.

Transmembrane regions (helical) follow at residues 9–29 (YFNLSGLILCPVLGSIILLFI), 39–59 (LIGLCASLITFLYSLVLWIQF), 89–109 (ISLFFVILTTFLIPICILVGW), 118–138 (EYIIAFLICEFLMIAVFCMLD), 173–193 (FFLYTLLGSLFMLLAILLILF), 214–234 (IFLWIAFFASFAVKVPMVPVH), 245–265 (PTAGSVILAGILLKFGTYGFL), 272–292 (FPEATLCFTPFIYTLSAIAII), 335–355 (ILLMLSHGLVSSALFLCVGVL), 367–387 (YGGLVSTMPNFSTIFFFFTLA), 413–433 (LVATLAALGMILGAAYSLWLY), and 457–477 (VFIFIPFLVGVVWMGVYPKVF).

This sequence belongs to the complex I subunit 4 family. As to quaternary structure, complex I is composed of at least 49 different subunits.

It is found in the mitochondrion inner membrane. The enzyme catalyses a ubiquinone + NADH + 5 H(+)(in) = a ubiquinol + NAD(+) + 4 H(+)(out). Its function is as follows. Core subunit of the mitochondrial membrane respiratory chain NADH dehydrogenase (Complex I) that is believed to belong to the minimal assembly required for catalysis. Complex I functions in the transfer of electrons from NADH to the respiratory chain. The immediate electron acceptor for the enzyme is believed to be ubiquinone. The chain is NADH-ubiquinone oxidoreductase chain 4 (ND4) from Arabidopsis thaliana (Mouse-ear cress).